The following is a 336-amino-acid chain: IgLON family member 5 (336 aa).

The first 30 residues, 1-30 (MPPPAPGARLRLLAAAALAGLAVISRGLLS), serve as a signal peptide directing secretion. Ig-like C2-type domains are found at residues 33 to 122 (LEFN…QPYT), 132 to 217 (PARI…VNYP), and 218 to 307 (PTIT…MRLL). 4 N-linked (GlcNAc...) asparagine glycosylation sites follow: N41, N49, N67, and N137. A disulfide bond links C54 and C112. 2 cysteine pairs are disulfide-bonded: C154–C195 and C238–C291. Residue N288 is glycosylated (N-linked (GlcNAc...) asparagine).

The protein belongs to the immunoglobulin superfamily. IgLON family.

It localises to the secreted. The sequence is that of IgLON family member 5 (IGLON5) from Homo sapiens (Human).